The chain runs to 564 residues: Histone acetyltransferase rtt109 (564 aa).

Residues Phe-138, 157-159 (HVL), and Trp-167 contribute to the acetyl-CoA site. Asp-261 functions as the Proton donor/acceptor in the catalytic mechanism. Lys-263 is modified (N6-acetyllysine; by autocatalysis). 2 disordered regions span residues 355 to 420 (YDKV…NAFY) and 506 to 549 (RKKD…ESPG). The span at 366–377 (AVSVSTDSQSSD) shows a compositional bias: low complexity. Polar residues-rich tracts occupy residues 394 to 417 (DPST…TDQN) and 512 to 521 (SQATTATSAQ). The segment covering 529 to 544 (GTVSTAVTAEASTTGT) has biased composition (low complexity).

Belongs to the RTT109 family.

The protein localises to the nucleus. It is found in the vacuole. The enzyme catalyses L-lysyl-[protein] + acetyl-CoA = N(6)-acetyl-L-lysyl-[protein] + CoA + H(+). It catalyses the reaction L-lysyl-[histone] + acetyl-CoA = N(6)-acetyl-L-lysyl-[histone] + CoA + H(+). Histone chaperone-dependent acetylase that modifies 'Lys-56' of histone H3 (H3K56ac). Histone H3 'Lys-56' acetylation may be required for S-phase-linked DNA damage tolerance. Also acetylates 'Lys-9' of histone H3 (H3K9ac). Autoacetylates. This chain is Histone acetyltransferase rtt109, found in Aspergillus flavus.